Reading from the N-terminus, the 43-residue chain is Cytochrome b559 subunit beta (43 aa).

A helical membrane pass occupies residues 18–34 (WLAIHGLAIPTVFFFGA). Histidine 22 provides a ligand contact to heme.

The protein belongs to the PsbE/PsbF family. As to quaternary structure, heterodimer of an alpha subunit and a beta subunit. PSII is composed of 1 copy each of membrane proteins PsbA, PsbB, PsbC, PsbD, PsbE, PsbF, PsbH, PsbI, PsbJ, PsbK, PsbL, PsbM, PsbT, PsbY, PsbZ, Psb30/Ycf12, at least 3 peripheral proteins of the oxygen-evolving complex and a large number of cofactors. It forms dimeric complexes. The cofactor is heme b.

The protein resides in the plastid. The protein localises to the chloroplast thylakoid membrane. This b-type cytochrome is tightly associated with the reaction center of photosystem II (PSII). PSII is a light-driven water:plastoquinone oxidoreductase that uses light energy to abstract electrons from H(2)O, generating O(2) and a proton gradient subsequently used for ATP formation. It consists of a core antenna complex that captures photons, and an electron transfer chain that converts photonic excitation into a charge separation. This is Cytochrome b559 subunit beta from Cyanidium caldarium (Red alga).